Consider the following 112-residue polypeptide: MEAKAYLNMIRISPRKVRLVADTIRNKPVAAAIATLYNLDKRSAEPVLKLLNSAIANAVNNNGMDADKLFVKTIFVNEGPTLKRFRPRAHGRAYEILKRTSHVTIIVSDERI.

It belongs to the universal ribosomal protein uL22 family. As to quaternary structure, part of the 50S ribosomal subunit.

Functionally, this protein binds specifically to 23S rRNA; its binding is stimulated by other ribosomal proteins, e.g. L4, L17, and L20. It is important during the early stages of 50S assembly. It makes multiple contacts with different domains of the 23S rRNA in the assembled 50S subunit and ribosome. The globular domain of the protein is located near the polypeptide exit tunnel on the outside of the subunit, while an extended beta-hairpin is found that lines the wall of the exit tunnel in the center of the 70S ribosome. The polypeptide is Large ribosomal subunit protein uL22 (Mesoplasma florum (strain ATCC 33453 / NBRC 100688 / NCTC 11704 / L1) (Acholeplasma florum)).